The sequence spans 559 residues: MDKPRHERQWAHGADLIVSQLEAQGVRQVFGIPGAKIDKVFDSLLDSSIRIIPVRHEANAAFMAAAVGRITGKAGVALVTSGPGCSNLITGMATANSEGDPVVALGGAVKRADKAKLVHQSMDTVAMFSPVTKYAVEVTASDALAEVVSNAFRAAEQGRPGSAFVSLPQDIVDGPASGSTLPASRAPQMGAAPDGAVDSVAQAIAAAKNPIFLLGLMASQPENSRALHRHAGKKPYSGHQHLSGAGAVNQDNFARFAGRVGLFNNQAGDRLLRQADLIICIGYSPVEYEPAMWNSGTATLVHIDVLPAYEERNYVPDIELVGDIAATLEKLAQRIEHRLVLTPQAADILADRQRQRELLDRRGAQLNQFALHPLRIVRAMQDIVNSDVTLTVDMGSFHIWIARYLYSFRARQVMISNGQQTMGVALPWAIGAWLVNPQRKVVSVSGDGGFLQSSMELETAVRLHANILHIIWVDNGYNMVAIQEQKKYQRLSGVEFGPVDFKVYAEAFGACGFAVESAEALEPTLRAAMDVDGPAVVAIPVDYRDNPLLMGQLHLSQIL.

FAD is bound by residues Arg159, 263 to 284, and 304 to 323; these read FNNQAGDRLLRQADLIICIGYS and DVLPAYEERNYVPDIELVGD. Asp447 provides a ligand contact to Mg(2+).

The protein belongs to the TPP enzyme family. Homodimer.

The catalysed reaction is 2 pyruvate + H(+) = (2S)-2-acetolactate + CO2. Its pathway is polyol metabolism; (R,R)-butane-2,3-diol biosynthesis; (R,R)-butane-2,3-diol from pyruvate: step 1/3. The sequence is that of Acetolactate synthase, catabolic (budB) from Raoultella terrigena (Klebsiella terrigena).